We begin with the raw amino-acid sequence, 155 residues long: MSTILNKVLNFVGWETEDEEEDVETVEESEDVEEEESKKPQFIQPLSSRRTQNKVVNIHSASQFKVIVMQPESFNDAKDVCDHLKSKKPVVVNLGSVQKEVAQRIVDFLSGSVYALDGSIQKVSNDIFIVAPHNVDIMGDFKGDITGKAVFPWLK.

The segment covering 16–35 (TEDEEEDVETVEESEDVEEE) has biased composition (acidic residues). The tract at residues 16 to 44 (TEDEEEDVETVEESEDVEEEESKKPQFIQ) is disordered.

It belongs to the SepF family. As to quaternary structure, homodimer. Interacts with FtsZ.

It localises to the cytoplasm. Functionally, cell division protein that is part of the divisome complex and is recruited early to the Z-ring. Probably stimulates Z-ring formation, perhaps through the cross-linking of FtsZ protofilaments. Its function overlaps with FtsA. In Acetivibrio thermocellus (strain ATCC 27405 / DSM 1237 / JCM 9322 / NBRC 103400 / NCIMB 10682 / NRRL B-4536 / VPI 7372) (Clostridium thermocellum), this protein is Cell division protein SepF.